A 114-amino-acid chain; its full sequence is Vacuolar ATPase assembly integral membrane protein VMA21 (114 aa).

Over 1–39 the chain is Cytoplasmic; sequence MATRRIISQEKTLLEKDDSIGSSPAADEKSNIAPAVPTS. Residues 40–60 traverse the membrane as a helical segment; it reads VIMKLLAFTLGMIVIPIGSYF. At 61–73 the chain is on the lumenal side; it reads ATVDSVFNGNSTY. A helical membrane pass occupies residues 74 to 94; sequence AGALAAIMANVVLIGYIFVAM. Over 95–114 the chain is Cytoplasmic; it reads AEDQSDQQEGGGPGDGKKDR. A Prevents secretion from ER motif is present at residues 111–114; sequence KKDR.

It belongs to the VMA21 family.

The protein resides in the endoplasmic reticulum membrane. It is found in the endoplasmic reticulum-Golgi intermediate compartment membrane. Its subcellular location is the cytoplasmic vesicle. It localises to the COPII-coated vesicle membrane. Its function is as follows. Required for the assembly of the V0 complex of the vacuolar ATPase (V-ATPase) in the endoplasmic reticulum. In Chaetomium globosum (strain ATCC 6205 / CBS 148.51 / DSM 1962 / NBRC 6347 / NRRL 1970) (Soil fungus), this protein is Vacuolar ATPase assembly integral membrane protein VMA21.